Consider the following 178-residue polypeptide: Large ribosomal subunit protein uL6 (178 aa).

It belongs to the universal ribosomal protein uL6 family. Part of the 50S ribosomal subunit.

This protein binds to the 23S rRNA, and is important in its secondary structure. It is located near the subunit interface in the base of the L7/L12 stalk, and near the tRNA binding site of the peptidyltransferase center. This Francisella tularensis subsp. tularensis (strain WY96-3418) protein is Large ribosomal subunit protein uL6.